We begin with the raw amino-acid sequence, 277 residues long: Outer kinetochore KNL1 complex subunit ZWINT (277 aa).

The tract at residues 80 to 155 (ASEDTSRQKA…MEKRRAVQNQ (76 aa)) is interaction with NDC80 and ZW10. The stretch at 104–217 (REHVEAIKIG…RYQTFLQLLY (114 aa)) forms a coiled coil. The disordered stretch occupies residues 228 to 277 (AEAEAENLPDDKPQQPTRPQEQSTGDTMGRDPGVSFKAVGLQPAGDVNLP). Over residues 241–253 (QQPTRPQEQSTGD) the composition is skewed to polar residues.

Component of the KNL1 complex composed of KNL1 and ZWINT. Part of the ten-subunit outer kinetochore KMN network that includes the KNL1, MIS12 and NDC80 complexes; a bioriented kinetochore contains approximately 150 copies of the network. Interacts with the MIS12 complex subunits MIS12 DSN1, and PMF1. Interacts with the NDC80 complex subunit NDC80 during mitosis. Interacts with ZW10. Interacts with CETN3.

Its subcellular location is the nucleus. It localises to the chromosome. The protein resides in the centromere. It is found in the kinetochore. Acts as a component of the outer kinetochore KNL1 complex that serves as a docking point for spindle assembly checkpoint components and mediates microtubule-kinetochore interactions. Kinetochores, consisting of a centromere-associated inner segment and a microtubule-contacting outer segment, play a crucial role in chromosome segregation by mediating the physical connection between centromeric DNA and spindle microtubules. The outer kinetochore is made up of the ten-subunit KMN network, comprising the MIS12, NDC80 and KNL1 complexes, and auxiliary microtubule-associated components; together they connect the outer kinetochore with the inner kinetochore, bind microtubules, and mediate interactions with mitotic checkpoint proteins that delay anaphase until chromosomes are bioriented on the spindle. Targets the RZZ complex to the kinetochore at prometaphase. Recruits MAD2L1 to the kinetochore, but is not required for BUB1B localization. In addition to orienting mitotic chromosomes, it is also essential for alignment of homologous chromosomes during meiotic metaphase I. In meiosis I, required to activate the spindle assembly checkpoint at unattached kinetochores to correct erroneous kinetochore-microtubule attachments. This Homo sapiens (Human) protein is Outer kinetochore KNL1 complex subunit ZWINT (ZWINT).